Reading from the N-terminus, the 284-residue chain is Asialoglycoprotein receptor 1 (284 aa).

At 1-39 the chain is on the cytoplasmic side; the sequence is MTKDYQDFQHLDNENDHHQLQRGPPPAPRLLQRLCSGFR. The Endocytosis signal signature appears at 5-8; it reads YQDF. C35 is lipidated: S-palmitoyl cysteine. The chain crosses the membrane as a helical; Signal-anchor for type II membrane protein span at residues 40–60; that stretch reads LFLLSLGLSILLLVVVCVITS. Residues 58–122 are a coiled coil; the sequence is ITSQNSQLRE…EDLREDHSRL (65 aa). Topologically, residues 61-284 are extracellular; that stretch reads QNSQLREDLR…VCETELGKAN (224 aa). N75, N78, and N146 each carry an N-linked (GlcNAc...) asparagine glycan. 3 disulfide bridges follow: C153–C164, C181–C276, and C254–C268. Positions 160-277 constitute a C-type lectin domain; sequence YEGSCYWFSS…CRRPYRWVCE (118 aa). Ca(2+) is bound by residues V190, E196, D215, Q239, D241, D242, E252, D253, N264, D265, and E277.

In terms of assembly, interacts with LASS2. Post-translationally, phosphorylated on a cytoplasmic Ser residue. Expressed exclusively in hepatic parenchymal cells.

It localises to the membrane. Functionally, mediates the endocytosis of plasma glycoproteins to which the terminal sialic acid residue on their complex carbohydrate moieties has been removed. The receptor recognizes terminal galactose and N-acetylgalactosamine units. After ligand binding to the receptor, the resulting complex is internalized and transported to a sorting organelle, where receptor and ligand are disassociated. The receptor then returns to the cell membrane surface. The protein is Asialoglycoprotein receptor 1 (Asgr1) of Rattus norvegicus (Rat).